Here is a 94-residue protein sequence, read N- to C-terminus: MSRSVWKPPFLHPSVLRLVQRALKEGSINKVIKIHSRASVILPNCLGLKFAVYNGKDYIPVSVDNQNMIGHKFGEFSPTRKFTGHGGDKKATRR.

It belongs to the universal ribosomal protein uS19 family.

Functionally, protein S19 forms a complex with S13 that binds strongly to the 16S ribosomal RNA. This is Small ribosomal subunit protein uS19 from Wolbachia pipientis subsp. Culex pipiens (strain wPip).